A 108-amino-acid polypeptide reads, in one-letter code: UPF0102 protein Sputcn32_3693 (108 aa).

This sequence belongs to the UPF0102 family.

This chain is UPF0102 protein Sputcn32_3693, found in Shewanella putrefaciens (strain CN-32 / ATCC BAA-453).